We begin with the raw amino-acid sequence, 296 residues long: Antisense-enhancing sequence 1 (296 aa).

Glu47 is a catalytic residue.

Belongs to the PhzF family.

May have isomerase activity. Enhances target gene silencing when coexpressed with antisense RNA. The protein is Antisense-enhancing sequence 1 (aes1) of Schizosaccharomyces pombe (strain 972 / ATCC 24843) (Fission yeast).